Here is a 1247-residue protein sequence, read N- to C-terminus: DNA-directed RNA polymerase subunit beta (1247 aa).

Belongs to the RNA polymerase beta chain family. In plastids the minimal PEP RNA polymerase catalytic core is composed of four subunits: alpha, beta, beta', and beta''. When a (nuclear-encoded) sigma factor is associated with the core the holoenzyme is formed, which can initiate transcription.

Its subcellular location is the plastid. The enzyme catalyses RNA(n) + a ribonucleoside 5'-triphosphate = RNA(n+1) + diphosphate. In terms of biological role, DNA-dependent RNA polymerase catalyzes the transcription of DNA into RNA using the four ribonucleoside triphosphates as substrates. This chain is DNA-directed RNA polymerase subunit beta (rpoB), found in Helicosporidium sp. subsp. Simulium jonesii (Green alga).